The following is a 375-amino-acid chain: tRNA-specific 2-thiouridylase MnmA (375 aa).

ATP-binding positions include 12–19 and methionine 38; that span reads GMSGGVDS. Residues 98 to 100 are interaction with target base in tRNA; the sequence is NPD. Cysteine 103 acts as the Nucleophile in catalysis. A disulfide bridge links cysteine 103 with cysteine 200. Glycine 127 is a binding site for ATP. Residues 150 to 152 are interaction with tRNA; that stretch reads KDQ. Cysteine 200 serves as the catalytic Cysteine persulfide intermediate. Residues 312-313 form an interaction with tRNA region; that stretch reads RY.

Belongs to the MnmA/TRMU family.

The protein resides in the cytoplasm. It catalyses the reaction S-sulfanyl-L-cysteinyl-[protein] + uridine(34) in tRNA + AH2 + ATP = 2-thiouridine(34) in tRNA + L-cysteinyl-[protein] + A + AMP + diphosphate + H(+). Its function is as follows. Catalyzes the 2-thiolation of uridine at the wobble position (U34) of tRNA, leading to the formation of s(2)U34. The polypeptide is tRNA-specific 2-thiouridylase MnmA (Lactobacillus gasseri (strain ATCC 33323 / DSM 20243 / BCRC 14619 / CIP 102991 / JCM 1131 / KCTC 3163 / NCIMB 11718 / NCTC 13722 / AM63)).